The sequence spans 275 residues: Large ribosomal subunit protein uL2c (275 aa).

Positions 225–256 are disordered; sequence AMNAVDHPHGGGEGRSPIGRSQPSTPWGRPAL.

This sequence belongs to the universal ribosomal protein uL2 family. As to quaternary structure, part of the 50S ribosomal subunit.

The protein resides in the plastid. It is found in the chloroplast. The polypeptide is Large ribosomal subunit protein uL2c (rpl2) (Cyanidium caldarium (Red alga)).